Here is a 510-residue protein sequence, read N- to C-terminus: GMP synthase [glutamine-hydrolyzing] (510 aa).

A Glutamine amidotransferase type-1 domain is found at 5–195 (PILVVNFGSQ…IYGVCKAEKN (191 aa)). Residue cysteine 82 is the Nucleophile of the active site. Catalysis depends on residues histidine 169 and glutamate 171. The GMPS ATP-PPase domain occupies 196-385 (WEMGDFIHEK…LGVPEEILRR (190 aa)). 223-229 (SGGVDST) serves as a coordination point for ATP.

As to quaternary structure, homodimer.

It catalyses the reaction XMP + L-glutamine + ATP + H2O = GMP + L-glutamate + AMP + diphosphate + 2 H(+). The protein operates within purine metabolism; GMP biosynthesis; GMP from XMP (L-Gln route): step 1/1. Functionally, catalyzes the synthesis of GMP from XMP. The protein is GMP synthase [glutamine-hydrolyzing] (guaA) of Aquifex aeolicus (strain VF5).